The primary structure comprises 940 residues: UvrABC system protein A (940 aa).

Residue G31–S38 coordinates ATP. The C4-type zinc-finger motif lies at C253–C280. ABC transporter domains are found at residues W310 to L587 and A607 to K937. G640–S647 serves as a coordination point for ATP. The C4-type zinc-finger motif lies at C740–C766.

The protein belongs to the ABC transporter superfamily. UvrA family. As to quaternary structure, forms a heterotetramer with UvrB during the search for lesions.

It is found in the cytoplasm. Its function is as follows. The UvrABC repair system catalyzes the recognition and processing of DNA lesions. UvrA is an ATPase and a DNA-binding protein. A damage recognition complex composed of 2 UvrA and 2 UvrB subunits scans DNA for abnormalities. When the presence of a lesion has been verified by UvrB, the UvrA molecules dissociate. This chain is UvrABC system protein A, found in Escherichia coli O6:H1 (strain CFT073 / ATCC 700928 / UPEC).